A 284-amino-acid polypeptide reads, in one-letter code: 4-diphosphocytidyl-2-C-methyl-D-erythritol kinase (284 aa).

Lys9 is an active-site residue. Residue 90–100 (PLVSGLGGDSS) coordinates ATP. Asp132 is an active-site residue.

Belongs to the GHMP kinase family. IspE subfamily.

It carries out the reaction 4-CDP-2-C-methyl-D-erythritol + ATP = 4-CDP-2-C-methyl-D-erythritol 2-phosphate + ADP + H(+). The protein operates within isoprenoid biosynthesis; isopentenyl diphosphate biosynthesis via DXP pathway; isopentenyl diphosphate from 1-deoxy-D-xylulose 5-phosphate: step 3/6. Its function is as follows. Catalyzes the phosphorylation of the position 2 hydroxy group of 4-diphosphocytidyl-2C-methyl-D-erythritol. The chain is 4-diphosphocytidyl-2-C-methyl-D-erythritol kinase from Dehalococcoides mccartyi (strain ATCC BAA-2266 / KCTC 15142 / 195) (Dehalococcoides ethenogenes (strain 195)).